A 107-amino-acid chain; its full sequence is Anti-adapter protein IraM (107 aa).

Belongs to the IraM/RssC family.

It localises to the cytoplasm. Inhibits RpoS proteolysis by regulating RssB activity, thereby increasing the stability of the sigma stress factor RpoS during magnesium starvation. The protein is Anti-adapter protein IraM of Escherichia coli (strain K12 / MC4100 / BW2952).